Reading from the N-terminus, the 512-residue chain is Histidine ammonia-lyase (512 aa).

A cross-link (5-imidazolinone (Cys-Gly)) is located at residues 143–145; the sequence is CSG. Residue serine 144 is modified to 2,3-didehydroalanine (Ser).

This sequence belongs to the PAL/histidase family. Post-translationally, contains an active site 4-methylidene-imidazol-5-one (MIO), which is formed autocatalytically by cyclization and dehydration of residues Cys-Ser-Gly.

It localises to the cytoplasm. It carries out the reaction L-histidine = trans-urocanate + NH4(+). Its pathway is amino-acid degradation; L-histidine degradation into L-glutamate; N-formimidoyl-L-glutamate from L-histidine: step 1/3. This Streptomyces avermitilis (strain ATCC 31267 / DSM 46492 / JCM 5070 / NBRC 14893 / NCIMB 12804 / NRRL 8165 / MA-4680) protein is Histidine ammonia-lyase.